The following is a 151-amino-acid chain: Large ribosomal subunit protein bL9 (151 aa).

This sequence belongs to the bacterial ribosomal protein bL9 family.

Binds to the 23S rRNA. The protein is Large ribosomal subunit protein bL9 of Bordetella avium (strain 197N).